We begin with the raw amino-acid sequence, 2005 residues long: Structural maintenance of chromosomes flexible hinge domain-containing protein 1 (2005 aa).

Over residues 1–13 (MAAADGGGPGGAS) the composition is skewed to gly residues. The segment at 1–23 (MAAADGGGPGGASVGTEEDGGGV) is disordered. An N-acetylalanine modification is found at A2. The ATPase activity domain stretch occupies residues 111–702 (TKERIDFLPH…LSVTWPEGDE (592 aa)). Position 1349 is an N6-acetyllysine (K1349). Residues K1374 and K1496 each participate in a glycyl lysine isopeptide (Lys-Gly) (interchain with G-Cter in SUMO2) cross-link. At T1499 the chain carries Phosphothreonine. The region spanning 1720-1847 (GDVLGKIAHL…DNLDAANHYR (128 aa)) is the SMC hinge domain. The residue at position 1802 (K1802) is an N6-succinyllysine. S1974 carries the post-translational modification Phosphoserine.

This sequence belongs to the SMC family. Highly divergent. In terms of assembly, homodimer; homodimerizes via its SMC hinge domain. Interacts with LRIF1. In terms of processing, sumoylated with SUMO1.

The protein resides in the chromosome. The catalysed reaction is ATP + H2O = ADP + phosphate + H(+). Non-canonical member of the structural maintenance of chromosomes (SMC) protein family that plays a key role in epigenetic silencing by regulating chromatin architecture. Promotes heterochromatin formation in both autosomes and chromosome X, probably by mediating the merge of chromatin compartments. Plays a key role in chromosome X inactivation in females by promoting the spreading of heterochromatin. Recruited to inactivated chromosome X by Xist RNA and acts by mediating the merge of chromatin compartments: promotes random chromatin interactions that span the boundaries of existing structures, leading to create a compartment-less architecture typical of inactivated chromosome X. Required to facilitate Xist RNA spreading. Also required for silencing of a subset of clustered autosomal loci in somatic cells, such as the DUX4 locus. Has ATPase activity; may participate in structural manipulation of chromatin in an ATP-dependent manner as part of its role in gene expression regulation. Also plays a role in DNA repair: localizes to sites of DNA double-strand breaks in response to DNA damage to promote the repair of DNA double-strand breaks. Acts by promoting non-homologous end joining (NHEJ) and inhibiting homologous recombination (HR) repair. This chain is Structural maintenance of chromosomes flexible hinge domain-containing protein 1, found in Homo sapiens (Human).